The chain runs to 534 residues: Peptide chain release factor 3 (534 aa).

The tr-type G domain occupies 9 to 278 (ARRRTFAIIS…FFIEHAPPPQ (270 aa)). Residues 18–25 (SHPDAGKT), 86–90 (DTPGH), and 140–143 (NKLD) contribute to the GTP site.

It belongs to the TRAFAC class translation factor GTPase superfamily. Classic translation factor GTPase family. PrfC subfamily.

It is found in the cytoplasm. In terms of biological role, increases the formation of ribosomal termination complexes and stimulates activities of RF-1 and RF-2. It binds guanine nucleotides and has strong preference for UGA stop codons. It may interact directly with the ribosome. The stimulation of RF-1 and RF-2 is significantly reduced by GTP and GDP, but not by GMP. In Xanthomonas oryzae pv. oryzae (strain MAFF 311018), this protein is Peptide chain release factor 3.